We begin with the raw amino-acid sequence, 775 residues long: DENN domain-containing protein 1B (775 aa).

The 130-residue stretch at 14-143 (DLVLKVKCHA…YNHPVPKANT (130 aa)) folds into the uDENN domain. Positions 180–316 (GLPTIPESRN…VVSALKNKLK (137 aa)) constitute a cDENN domain. Residues 318–395 (QSTATGDGVA…DGRLAKLNAG (78 aa)) enclose the dDENN domain. The FXDXF motif signature appears at 398–402 (FSDVF). Y520 is subject to Phosphotyrosine. A phosphoserine mark is found at S535, S536, S549, and S552. Positions 566–575 (DLLGEILDTL) match the Clathrin box motif. Disordered stretches follow at residues 635-654 (DSAL…VSSS) and 671-706 (HLGA…KRET). Residues 639-651 (HGKHLPPSPRKRV) show a composition bias toward basic residues. Residues S652 and S653 each carry the phosphoserine modification. Residues 695 to 706 (QTDKGKTEKRET) are compositionally biased toward basic and acidic residues.

In terms of assembly, interacts with RAB35. Interacts with clathrin heavy chain/CLTC. Interacts with components of the adapter protein complex 2 (AP-2) AP2A2 and AP2B1. Interacts with CD3E. In terms of processing, phosphorylated on serine and/or threonine, possibly regulating the guanine nucleotide exchange factor (GEF) activity. Highly expressed in dendritic and natural killer cells and at lower levels in other myeloid lineage cells and in pituitary. Significantly up-regulated in effector memory T-cells as compared with naive T-cells.

Its subcellular location is the cytoplasm. The protein resides in the cytosol. It localises to the cytoplasmic vesicle. It is found in the clathrin-coated vesicle. Functionally, guanine nucleotide exchange factor (GEF) for RAB35 that acts as a regulator of T-cell receptor (TCR) internalization in TH2 cells. Acts by promoting the exchange of GDP to GTP, converting inactive GDP-bound RAB35 into its active GTP-bound form. Plays a role in clathrin-mediated endocytosis. Controls cytokine production in TH2 lymphocytes by controlling the rate of TCR internalization and routing to endosomes: acts by mediating clathrin-mediated endocytosis of TCR via its interaction with the adapter protein complex 2 (AP-2) and GEF activity. Dysregulation leads to impaired TCR down-modulation and recycling, affecting cytokine production in TH2 cells. The polypeptide is DENN domain-containing protein 1B (Homo sapiens (Human)).